Consider the following 409-residue polypeptide: Multifunctional CCA protein (409 aa).

The ATP site is built by G8 and R11. The CTP site is built by G8 and R11. Mg(2+) is bound by residues D21 and D23. Positions 91, 137, and 140 each coordinate ATP. Residues R91, R137, and R140 each coordinate CTP. Residues 228–329 (TGIHTLMVVE…ITLMDQNDAW (102 aa)) form the HD domain.

Belongs to the tRNA nucleotidyltransferase/poly(A) polymerase family. Bacterial CCA-adding enzyme type 1 subfamily. As to quaternary structure, monomer. Can also form homodimers and oligomers. The cofactor is Mg(2+). Ni(2+) is required as a cofactor.

The enzyme catalyses a tRNA precursor + 2 CTP + ATP = a tRNA with a 3' CCA end + 3 diphosphate. It catalyses the reaction a tRNA with a 3' CCA end + 2 CTP + ATP = a tRNA with a 3' CCACCA end + 3 diphosphate. In terms of biological role, catalyzes the addition and repair of the essential 3'-terminal CCA sequence in tRNAs without using a nucleic acid template. Adds these three nucleotides in the order of C, C, and A to the tRNA nucleotide-73, using CTP and ATP as substrates and producing inorganic pyrophosphate. tRNA 3'-terminal CCA addition is required both for tRNA processing and repair. Also involved in tRNA surveillance by mediating tandem CCA addition to generate a CCACCA at the 3' terminus of unstable tRNAs. While stable tRNAs receive only 3'-terminal CCA, unstable tRNAs are marked with CCACCA and rapidly degraded. In Psychromonas ingrahamii (strain DSM 17664 / CCUG 51855 / 37), this protein is Multifunctional CCA protein.